Consider the following 211-residue polypeptide: Hypoxanthine-guanine phosphoribosyltransferase (211 aa).

The disordered stretch occupies residues 1-20; sequence MSNSAKSPSGPVGDEGRRNY. GMP-binding positions include K66, 125 to 133, K157, and D185; that span reads EDIVDSAIT. The active-site Proton acceptor is D129. D185 lines the Mg(2+) pocket.

The protein belongs to the purine/pyrimidine phosphoribosyltransferase family. Requires Mg(2+) as cofactor.

The protein resides in the cytoplasm. The catalysed reaction is IMP + diphosphate = hypoxanthine + 5-phospho-alpha-D-ribose 1-diphosphate. It carries out the reaction GMP + diphosphate = guanine + 5-phospho-alpha-D-ribose 1-diphosphate. It participates in purine metabolism; IMP biosynthesis via salvage pathway; IMP from hypoxanthine: step 1/1. Functionally, converts guanine to guanosine monophosphate, and hypoxanthine to inosine monophosphate. Transfers the 5-phosphoribosyl group from 5-phosphoribosylpyrophosphate onto the purine. Plays a central role in the generation of purine nucleotides through the purine salvage pathway. The polypeptide is Hypoxanthine-guanine phosphoribosyltransferase (Leishmania donovani).